Reading from the N-terminus, the 297-residue chain is Acetylglutamate kinase (297 aa).

Residues Gly72–Gly73, Arg94, and Asn187 each bind substrate.

This sequence belongs to the acetylglutamate kinase family. ArgB subfamily.

The protein localises to the cytoplasm. It catalyses the reaction N-acetyl-L-glutamate + ATP = N-acetyl-L-glutamyl 5-phosphate + ADP. It participates in amino-acid biosynthesis; L-arginine biosynthesis; N(2)-acetyl-L-ornithine from L-glutamate: step 2/4. Its function is as follows. Catalyzes the ATP-dependent phosphorylation of N-acetyl-L-glutamate. This chain is Acetylglutamate kinase, found in Synechocystis sp. (strain ATCC 27184 / PCC 6803 / Kazusa).